The primary structure comprises 760 residues: GLC7-interacting protein 4 (760 aa).

Disordered stretches follow at residues 449-573 (KKKP…SLQS) and 593-626 (KSAS…SSST). Low complexity-rich tracts occupy residues 454–474 (ITKL…ASPS) and 494–506 (SSRS…VRTT). 2 positions are modified to phosphoserine: Ser-497 and Ser-501. Residues 512–525 (AETKKSVVSPEKRK) show a composition bias toward basic and acidic residues. Positions 534 to 554 (SSSLQSYTNKQQTSYLNSTRH) are enriched in polar residues. Composition is skewed to low complexity over residues 561–573 (SKLN…SLQS) and 594–626 (SAST…SSST). Ser-609 is subject to Phosphoserine.

The protein belongs to the GIP4 family. In terms of assembly, interacts with GLC7.

It localises to the cytoplasm. Its function is as follows. GLC7 phosphatase-regulatory protein involved in GLC7 subcellular redistribution and chromosome segregation. The polypeptide is GLC7-interacting protein 4 (GIP4) (Saccharomyces cerevisiae (strain ATCC 204508 / S288c) (Baker's yeast)).